A 167-amino-acid chain; its full sequence is MATLEVLRFPDERLRTIAQEVAHVDDQVRVIIKDMLETMYDENGIGLAATQVNIHQRIVVIDVSEERNEPLVLINPQIIKKDGTTVSEEGCLSVPNSYAKVDRAETVTVAALNEQGEEFVLDADELLAICIQHELDHLQGKLFIDYLSPLKRQRIRKKLEKEAKFAE.

Fe cation is bound by residues Cys91 and His133. Residue Glu134 is part of the active site. A Fe cation-binding site is contributed by His137.

It belongs to the polypeptide deformylase family. It depends on Fe(2+) as a cofactor.

The catalysed reaction is N-terminal N-formyl-L-methionyl-[peptide] + H2O = N-terminal L-methionyl-[peptide] + formate. Functionally, removes the formyl group from the N-terminal Met of newly synthesized proteins. Requires at least a dipeptide for an efficient rate of reaction. N-terminal L-methionine is a prerequisite for activity but the enzyme has broad specificity at other positions. The sequence is that of Peptide deformylase from Pseudoalteromonas translucida (strain TAC 125).